Here is a 226-residue protein sequence, read N- to C-terminus: Octanoyltransferase (226 aa).

A BPL/LPL catalytic domain is found at 34–216 (GEANELVWLL…AWTEAFGPVR (183 aa)). Substrate contacts are provided by residues 73–80 (RGGEYTYH), 145–147 (AIG), and 158–160 (GIA). C176 serves as the catalytic Acyl-thioester intermediate.

It belongs to the LipB family.

It is found in the cytoplasm. It carries out the reaction octanoyl-[ACP] + L-lysyl-[protein] = N(6)-octanoyl-L-lysyl-[protein] + holo-[ACP] + H(+). It participates in protein modification; protein lipoylation via endogenous pathway; protein N(6)-(lipoyl)lysine from octanoyl-[acyl-carrier-protein]: step 1/2. Catalyzes the transfer of endogenously produced octanoic acid from octanoyl-acyl-carrier-protein onto the lipoyl domains of lipoate-dependent enzymes. Lipoyl-ACP can also act as a substrate although octanoyl-ACP is likely to be the physiological substrate. This chain is Octanoyltransferase, found in Maricaulis maris (strain MCS10) (Caulobacter maris).